The following is a 505-amino-acid chain: ATP synthase subunit alpha (505 aa).

Residue 171–178 (GDRQTGKT) coordinates ATP.

Belongs to the ATPase alpha/beta chains family. F-type ATPases have 2 components, CF(1) - the catalytic core - and CF(0) - the membrane proton channel. CF(1) has five subunits: alpha(3), beta(3), gamma(1), delta(1), epsilon(1). CF(0) has three main subunits: a(1), b(2) and c(9-12). The alpha and beta chains form an alternating ring which encloses part of the gamma chain. CF(1) is attached to CF(0) by a central stalk formed by the gamma and epsilon chains, while a peripheral stalk is formed by the delta and b chains.

It localises to the cell inner membrane. It carries out the reaction ATP + H2O + 4 H(+)(in) = ADP + phosphate + 5 H(+)(out). Functionally, produces ATP from ADP in the presence of a proton gradient across the membrane. The alpha chain is a regulatory subunit. This is ATP synthase subunit alpha from Campylobacter fetus subsp. fetus (strain 82-40).